The following is an 85-amino-acid chain: uncharacterized protein (85 aa).

This is an uncharacterized protein from Methanocaldococcus jannaschii (strain ATCC 43067 / DSM 2661 / JAL-1 / JCM 10045 / NBRC 100440) (Methanococcus jannaschii).